A 501-amino-acid chain; its full sequence is Probable cytosol aminopeptidase (501 aa).

Positions 267 and 272 each coordinate Mn(2+). Lys-279 is a catalytic residue. Asp-290, Asp-349, and Glu-351 together coordinate Mn(2+). Arg-353 is an active-site residue.

It belongs to the peptidase M17 family. Mn(2+) is required as a cofactor.

It localises to the cytoplasm. The enzyme catalyses Release of an N-terminal amino acid, Xaa-|-Yaa-, in which Xaa is preferably Leu, but may be other amino acids including Pro although not Arg or Lys, and Yaa may be Pro. Amino acid amides and methyl esters are also readily hydrolyzed, but rates on arylamides are exceedingly low.. It catalyses the reaction Release of an N-terminal amino acid, preferentially leucine, but not glutamic or aspartic acids.. Functionally, presumably involved in the processing and regular turnover of intracellular proteins. Catalyzes the removal of unsubstituted N-terminal amino acids from various peptides. The sequence is that of Probable cytosol aminopeptidase from Hamiltonella defensa subsp. Acyrthosiphon pisum (strain 5AT).